Here is a 193-residue protein sequence, read N- to C-terminus: Phosphoheptose isomerase (193 aa).

Positions 37 to 193 (LADSFKVGGK…QLIEKEMVKA (157 aa)) constitute an SIS domain. 52 to 54 (NGG) is a substrate binding site. 2 residues coordinate Zn(2+): H61 and E65. Residues E65, 93–94 (ND), 119–121 (STS), S124, and Q172 each bind substrate. Zn(2+) contacts are provided by Q172 and H180.

The protein belongs to the SIS family. GmhA subfamily. Homotetramer. The cofactor is Zn(2+).

The protein localises to the cytoplasm. It carries out the reaction 2 D-sedoheptulose 7-phosphate = D-glycero-alpha-D-manno-heptose 7-phosphate + D-glycero-beta-D-manno-heptose 7-phosphate. It functions in the pathway carbohydrate biosynthesis; D-glycero-D-manno-heptose 7-phosphate biosynthesis; D-glycero-alpha-D-manno-heptose 7-phosphate and D-glycero-beta-D-manno-heptose 7-phosphate from sedoheptulose 7-phosphate: step 1/1. It participates in bacterial outer membrane biogenesis; LPS core biosynthesis. In terms of biological role, catalyzes the isomerization of sedoheptulose 7-phosphate in D-glycero-D-manno-heptose 7-phosphate. This is Phosphoheptose isomerase from Photorhabdus laumondii subsp. laumondii (strain DSM 15139 / CIP 105565 / TT01) (Photorhabdus luminescens subsp. laumondii).